Reading from the N-terminus, the 446-residue chain is ATP-dependent protease ATPase subunit HslU (446 aa).

ATP is bound by residues valine 17, 59-64 (GVGKTE), aspartate 255, glutamate 320, and arginine 392.

Belongs to the ClpX chaperone family. HslU subfamily. In terms of assembly, a double ring-shaped homohexamer of HslV is capped on each side by a ring-shaped HslU homohexamer. The assembly of the HslU/HslV complex is dependent on binding of ATP.

The protein localises to the cytoplasm. Functionally, ATPase subunit of a proteasome-like degradation complex; this subunit has chaperone activity. The binding of ATP and its subsequent hydrolysis by HslU are essential for unfolding of protein substrates subsequently hydrolyzed by HslV. HslU recognizes the N-terminal part of its protein substrates and unfolds these before they are guided to HslV for hydrolysis. The polypeptide is ATP-dependent protease ATPase subunit HslU (Azotobacter vinelandii (strain DJ / ATCC BAA-1303)).